The chain runs to 455 residues: Probable Xaa-Pro aminopeptidase GSTUM_00008071001 (455 aa).

4 residues coordinate Mn(2+): aspartate 251, aspartate 262, glutamate 386, and glutamate 426.

The protein belongs to the peptidase M24B family. Mn(2+) serves as cofactor.

It carries out the reaction Release of any N-terminal amino acid, including proline, that is linked to proline, even from a dipeptide or tripeptide.. Functionally, catalyzes the removal of a penultimate prolyl residue from the N-termini of peptides. This Tuber melanosporum (strain Mel28) (Perigord black truffle) protein is Probable Xaa-Pro aminopeptidase GSTUM_00008071001.